We begin with the raw amino-acid sequence, 238 residues long: uncharacterized protein (238 aa).

The protein belongs to the mimivirus L74/L77/R857 family.

This is an uncharacterized protein from Acanthamoeba polyphaga mimivirus (APMV).